A 277-amino-acid polypeptide reads, in one-letter code: Undecaprenyl-diphosphatase (277 aa).

The next 6 membrane-spanning stretches (helical) occupy residues 88–108, 117–137, 157–179, 191–211, 227–247, and 255–275; these read MGWL…LFQD, MWIV…ADAV, FAQA…AGLL, SFLL…YKTV, LATV…LKFV, and FVWY…FNVI.

The protein belongs to the UppP family.

Its subcellular location is the cell membrane. It carries out the reaction di-trans,octa-cis-undecaprenyl diphosphate + H2O = di-trans,octa-cis-undecaprenyl phosphate + phosphate + H(+). Functionally, catalyzes the dephosphorylation of undecaprenyl diphosphate (UPP). Confers resistance to bacitracin. This is Undecaprenyl-diphosphatase from Paenarthrobacter aurescens (strain TC1).